Here is a 152-residue protein sequence, read N- to C-terminus: FAD synthase (152 aa).

ATP-binding positions include T9–F10, H14–H17, and D92.

The protein belongs to the archaeal FAD synthase family. As to quaternary structure, homodimer. The cofactor is a divalent metal cation.

It carries out the reaction FMN + ATP + H(+) = FAD + diphosphate. Its pathway is cofactor biosynthesis; FAD biosynthesis; FAD from FMN: step 1/1. In terms of biological role, catalyzes the transfer of the AMP portion of ATP to flavin mononucleotide (FMN) to produce flavin adenine dinucleotide (FAD) coenzyme. This Ferroglobus placidus (strain DSM 10642 / AEDII12DO) protein is FAD synthase.